A 195-amino-acid chain; its full sequence is Flagellar transcriptional regulator FlhC (195 aa).

Positions 137, 140, 157, and 160 each coordinate Zn(2+). A disordered region spans residues 165-195; it reads RAGSARRKTTTRKAVAPTHKTTAASRKAVVA.

This sequence belongs to the FlhC family. Heterohexamer composed of two FlhC and four FlhD subunits. Each FlhC binds a FlhD dimer, forming a heterotrimer, and a hexamer assembles by dimerization of two heterotrimers. Requires Zn(2+) as cofactor.

It is found in the cytoplasm. In terms of biological role, functions in complex with FlhD as a master transcriptional regulator that regulates transcription of several flagellar and non-flagellar operons by binding to their promoter region. Activates expression of class 2 flagellar genes, including fliA, which is a flagellum-specific sigma factor that turns on the class 3 genes. Also regulates genes whose products function in a variety of physiological pathways. This Thauera aminoaromatica protein is Flagellar transcriptional regulator FlhC.